Reading from the N-terminus, the 263-residue chain is GTP cyclohydrolase 1 type 2 homolog (263 aa).

A divalent metal cation contacts are provided by H65, H66, D104, H225, and E229.

Belongs to the GTP cyclohydrolase I type 2/NIF3 family. Homohexamer.

This is GTP cyclohydrolase 1 type 2 homolog from Nostoc sp. (strain PCC 7120 / SAG 25.82 / UTEX 2576).